The following is an 80-amino-acid chain: Defensin-like protein 2 (80 aa).

The N-terminal stretch at 1-29 is a signal peptide; sequence MAKFASIIVLLFVALVVFAAFEEPTMVEA. Glutamine 30 is modified (pyrrolidone carboxylic acid). Disulfide bonds link cysteine 33/cysteine 80, cysteine 44/cysteine 65, cysteine 50/cysteine 74, and cysteine 54/cysteine 76.

The protein belongs to the DEFL family.

Its subcellular location is the secreted. In terms of biological role, possesses antifungal activity sensitive to inorganic cations. Induces potential changes in fungal membranes and increased K(+) efflux and Ca(2+) uptake. This is Defensin-like protein 2 (AFP2) from Raphanus sativus (Radish).